The sequence spans 185 residues: Translation initiation factor IF-3 (185 aa).

Belongs to the IF-3 family. Monomer.

Its subcellular location is the cytoplasm. Its function is as follows. IF-3 binds to the 30S ribosomal subunit and shifts the equilibrium between 70S ribosomes and their 50S and 30S subunits in favor of the free subunits, thus enhancing the availability of 30S subunits on which protein synthesis initiation begins. The polypeptide is Translation initiation factor IF-3 (Streptococcus pneumoniae (strain Hungary19A-6)).